Reading from the N-terminus, the 117-residue chain is Replication initiation control protein YabA (117 aa).

The tract at residues 45 to 81 (NQHLRERLDQSDRDKSSETENDSAQKPGHSDIGEGHD) is disordered. Basic and acidic residues-rich tracts occupy residues 46-62 (QHLR…KSSE) and 72-81 (GHSDIGEGHD). Zn(2+) contacts are provided by H92, C94, C107, and C110.

This sequence belongs to the YabA family. Homotetramer. Interacts with both DnaA and DnaN, acting as a bridge between these two proteins. It depends on Zn(2+) as a cofactor.

The protein localises to the cytoplasm. Its subcellular location is the nucleoid. Functionally, involved in control of chromosome replication initiation. Inhibits the cooperative binding of DnaA to the oriC region, thus negatively regulating initiation of chromosome replication. Inhibits the ability of DnaA-ATP to form a helix on DNA; does not disassemble preformed DnaA-DNA helices. Decreases the residence time of DnaA on the chromosome at its binding sites (oriC, replication forks and promoter-binding sites). Tethers DnaA to the replication machinery via the DNA polymerase beta sliding clamp subunit (dnaN). Associates with oriC and other DnaA targets on the chromosome in a DnaA-dependent manner. The sequence is that of Replication initiation control protein YabA from Bacillus pumilus (strain SAFR-032).